We begin with the raw amino-acid sequence, 127 residues long: Fluoride-specific ion channel FluC (127 aa).

The next 4 helical transmembrane spans lie at 4-24 (LLCA…WLGM), 35-55 (IGTL…LAWF), 71-91 (TGFC…VFLL), and 101-121 (LNVM…FWLF). Na(+) is bound by residues Gly75 and Thr78.

It belongs to the fluoride channel Fluc/FEX (TC 1.A.43) family.

It is found in the cell inner membrane. The catalysed reaction is fluoride(in) = fluoride(out). Its activity is regulated as follows. Na(+) is not transported, but it plays an essential structural role and its presence is essential for fluoride channel function. Fluoride-specific ion channel. Important for reducing fluoride concentration in the cell, thus reducing its toxicity. The sequence is that of Fluoride-specific ion channel FluC from Klebsiella pneumoniae (strain 342).